Here is a 1413-residue protein sequence, read N- to C-terminus: DNA-directed RNA polymerase subunit beta' (1413 aa).

Positions 70, 72, 85, and 88 each coordinate Zn(2+). Residues Asp-460, Asp-462, and Asp-464 each contribute to the Mg(2+) site. Zn(2+) contacts are provided by Cys-819, Cys-893, Cys-900, and Cys-903.

Belongs to the RNA polymerase beta' chain family. In terms of assembly, the RNAP catalytic core consists of 2 alpha, 1 beta, 1 beta' and 1 omega subunit. When a sigma factor is associated with the core the holoenzyme is formed, which can initiate transcription. Requires Mg(2+) as cofactor. It depends on Zn(2+) as a cofactor.

The catalysed reaction is RNA(n) + a ribonucleoside 5'-triphosphate = RNA(n+1) + diphosphate. Its function is as follows. DNA-dependent RNA polymerase catalyzes the transcription of DNA into RNA using the four ribonucleoside triphosphates as substrates. The protein is DNA-directed RNA polymerase subunit beta' of Burkholderia ambifaria (strain MC40-6).